Here is a 215-residue protein sequence, read N- to C-terminus: Phosphatidylserine decarboxylase proenzyme (215 aa).

S184 serves as the catalytic Schiff-base intermediate with substrate; via pyruvic acid. S184 carries the post-translational modification Pyruvic acid (Ser); by autocatalysis.

This sequence belongs to the phosphatidylserine decarboxylase family. PSD-A subfamily. Heterodimer of a large membrane-associated beta subunit and a small pyruvoyl-containing alpha subunit. Pyruvate is required as a cofactor. Is synthesized initially as an inactive proenzyme. Formation of the active enzyme involves a self-maturation process in which the active site pyruvoyl group is generated from an internal serine residue via an autocatalytic post-translational modification. Two non-identical subunits are generated from the proenzyme in this reaction, and the pyruvate is formed at the N-terminus of the alpha chain, which is derived from the carboxyl end of the proenzyme. The post-translation cleavage follows an unusual pathway, termed non-hydrolytic serinolysis, in which the side chain hydroxyl group of the serine supplies its oxygen atom to form the C-terminus of the beta chain, while the remainder of the serine residue undergoes an oxidative deamination to produce ammonia and the pyruvoyl prosthetic group on the alpha chain.

The protein resides in the cell membrane. The enzyme catalyses a 1,2-diacyl-sn-glycero-3-phospho-L-serine + H(+) = a 1,2-diacyl-sn-glycero-3-phosphoethanolamine + CO2. Its pathway is phospholipid metabolism; phosphatidylethanolamine biosynthesis; phosphatidylethanolamine from CDP-diacylglycerol: step 2/2. In terms of biological role, catalyzes the formation of phosphatidylethanolamine (PtdEtn) from phosphatidylserine (PtdSer). In Ralstonia pickettii (strain 12J), this protein is Phosphatidylserine decarboxylase proenzyme.